The sequence spans 95 residues: Acylphosphatase (95 aa).

An Acylphosphatase-like domain is found at 10–95 (CIHVTVSGKV…VEDYSDFRVR (86 aa)). Residues arginine 25 and asparagine 43 contribute to the active site.

The protein belongs to the acylphosphatase family.

The enzyme catalyses an acyl phosphate + H2O = a carboxylate + phosphate + H(+). This is Acylphosphatase (acyP) from Coxiella burnetii (strain RSA 493 / Nine Mile phase I).